A 161-amino-acid polypeptide reads, in one-letter code: N5-carboxyaminoimidazole ribonucleotide mutase (161 aa).

Positions 9, 12, and 39 each coordinate substrate.

This sequence belongs to the AIR carboxylase family. Class I subfamily.

The catalysed reaction is 5-carboxyamino-1-(5-phospho-D-ribosyl)imidazole + H(+) = 5-amino-1-(5-phospho-D-ribosyl)imidazole-4-carboxylate. It participates in purine metabolism; IMP biosynthesis via de novo pathway; 5-amino-1-(5-phospho-D-ribosyl)imidazole-4-carboxylate from 5-amino-1-(5-phospho-D-ribosyl)imidazole (N5-CAIR route): step 2/2. Catalyzes the conversion of N5-carboxyaminoimidazole ribonucleotide (N5-CAIR) to 4-carboxy-5-aminoimidazole ribonucleotide (CAIR). This Vibrio cholerae serotype O1 (strain ATCC 39315 / El Tor Inaba N16961) protein is N5-carboxyaminoimidazole ribonucleotide mutase.